The chain runs to 488 residues: Neisserial heparin binding antigen (488 aa).

The N-terminal stretch at 1–17 (MFKRSVIAMACIFALSA) is a signal peptide. The N-palmitoyl cysteine moiety is linked to residue C18. The S-diacylglycerol cysteine moiety is linked to residue C18. The tract at residues 21–201 (GGGGSPDVKS…NPAPANGGSN (181 aa)) is disordered. Over residues 43–53 (SEKETEAKEDA) the composition is skewed to basic and acidic residues. A compositionally biased stretch (low complexity) spans 54–70 (PQAGSQGQGAPSAQGSQ). Polar residues-rich tracts occupy residues 101–118 (DMPQ…NHTP) and 127–142 (MENQ…QPAN). Residues 160–183 (AGGQNAGNTAAQGANQAGNNQAAG) show a composition bias toward low complexity. The Arg-rich motif motif lies at 296-306 (RFRRSARSRRS). Positions 306-488 (SLPAEMPLIP…GVFAGKKEQD (183 aa)) are C1 fragment.

Belongs to the NHBA family. As to quaternary structure, the C-terminal beta-barrel forms a monomer. In terms of processing, cleaved in vivo by the Neisserial phase-variable autotransporter/serine protease NalP to give 2 fragments. The N-terminus remains in the cell outer membrane while the 22 kDa C-terminus (beginning on Ser-293) is soluble; this soluble fragment is called C2. Cleaved in vitro by human lactoferrin (LTF, between Arg-305 and Ser-306), this fragment is called C1. Cleavage by NalP or lactoferrin does not alter killing of Neisseria by bactericidal antibodies in vitro. Recombinant and cell surface protein is cleaved by human saliva kallikrein (KLK1) between Ser-303 and Arg-304; in saliva kallikrein is more active on NHBA than lactoferrin. Human plasma kallikrein (KLKB1) cleaves in a similar manner to KLK1.

The protein localises to the cell outer membrane. Its subcellular location is the cell surface. The protein resides in the host mitochondrion. Its function is as follows. A major human immunogenic protein detected in patients recovering from meningitidis, where it induces bactericidal antibodies. Binds heparin and heparan sulfate proteoglycan in vitro via the Arg-rich motif. Heparin-binding to this protein protects bacteria against killing by bactericidal antibodies (serum killing). Binds to human cells via the Arg-rich region; binding may require the intact protein as protein fragments do not bind to human cells. Protein binding to human cells is abolished by treatment with heparinase III but not chondroitinase ABC. The bacteria binds a number of human extracellular sialyated and/or sulfated glycans via this protein, including chondroitin sulfate (KD=5.2 nM), heparin (KD=52 nM) and ganglioside GT3 (KD=210 nM). The recombinant protein binds DNA non-specifically. Functionally, plays a role in extracellular-DNA (eDNA) mediated biofilm formation. In strain MC58 eDNA stimulates biofilm formation. When NHBA is not processed by NalP there is an increase in positively charged, NHBA- and IgA-derived DNA-binding peptides on the cell surface, resulting in increased DNA-binding peptides and increased biofilm formation. In terms of biological role, [C2 fragment] Localizes to host mitochondria when applied to the apical side of human endothelial cell layers, where it induces production of reactive oxygen species which lead to increased permeability of host endothelial cells. The C1 fragment (which lacks the first 14 residues of C2) does not have this effect. It is not known if this occurs during Neisseria infections. The chain is Neisserial heparin binding antigen from Neisseria meningitidis serogroup B (strain ATCC BAA-335 / MC58).